Here is a 603-residue protein sequence, read N- to C-terminus: Phosphomethylpyrimidine synthase (603 aa).

Substrate is bound by residues Asn-224, Met-253, Tyr-282, His-318, 338–340 (SRG), 379–382 (DGLR), and Glu-418. Residue His-422 coordinates Zn(2+). A substrate-binding site is contributed by Tyr-445. His-486 serves as a coordination point for Zn(2+). [4Fe-4S] cluster is bound by residues Cys-566, Cys-569, and Cys-574.

Belongs to the ThiC family. As to quaternary structure, homodimer. The cofactor is [4Fe-4S] cluster.

It carries out the reaction 5-amino-1-(5-phospho-beta-D-ribosyl)imidazole + S-adenosyl-L-methionine = 4-amino-2-methyl-5-(phosphooxymethyl)pyrimidine + CO + 5'-deoxyadenosine + formate + L-methionine + 3 H(+). The protein operates within cofactor biosynthesis; thiamine diphosphate biosynthesis. Catalyzes the synthesis of the hydroxymethylpyrimidine phosphate (HMP-P) moiety of thiamine from aminoimidazole ribotide (AIR) in a radical S-adenosyl-L-methionine (SAM)-dependent reaction. The chain is Phosphomethylpyrimidine synthase from Xylella fastidiosa (strain Temecula1 / ATCC 700964).